A 3093-amino-acid polypeptide reads, in one-letter code: MVFESVVVDVLNRFLGDYVVDLDTSQLSLGIWKGAVALKNLQIKENALSQLDVPFKVKVGHIGNLKLIIPWKNLYSQPVEAVLEEIYLLIVPSSRIKYDPIKEEKQLMEAKQQELKRIEEAKQKVVDQEQHLLEKQDTFAEKLVTQIIKNLQVKISSIHIRYEDDITNRDKPLSFGISLQNLSMQTTDQYWVPCLHDETEKLVRKLIRLDNLFAYWNVKSQMFYLNDYDDSLDDLRNGIVNENIVPEGYDFVFRPISANAKLVMNRRSDFDFSAPKINLDVELHNIAIEFNKPQYFSIMELLESVDMMTQNMPYRKFRPDVPLHHHAREWWAYAIHGVLEVNVCPRLRMWSWKHIRKHRGKMKQYKELYKKKLTSKKPPGELLVSLEELEKTLDVLNITIARQQAEVEVKKAGYKIYKEGVKDPEDNKGWFSWLWSWSEQNTNEQQPDVKPGILEEMLTPEEKALLYEAIGYSETAVDPTLPKTFEALKFFVHLKSMSVVLRENHQKPELIDIVIEEFSTLIVQRPGAQAVKFETKIDSFHITGLPDNSEKPRLLSSLDDAMSLFQITFEINPLDETVTQRCIIEAEPLEIIYDARTVNSIVEFFRPPKEVHLAQLTSATLTKLEEFRNKTATGLLYIIETQKVLDLRINLKASYIIVPQDGIFSPTSNLLLLDLGHLKVTSKSRSELPDVKQGEANLKEIMDIAYDSFDIQLTSIQLLYSRVGDNWREARKLNVSTQHILVPMHFNLELSKAMVFMDVRMPKFKIFGKLPLISLRISDKKLQGIMELVESIPKPEPVTEVSAPVKSFQIQTSTSLGTSQISQKIIPLLELPSVSEDDSEEEFFDAPCSPLDEPLQFPTGVKSIRTRKLQKQDCSVNMTTFKIRFEVPKVLIEFYHLVGDCELSVVEIHVLGLGTEIEIRTYDLKANAFLKEFCLKCPEYLDENRKPVYLVTTLDNTMEDLLTLEYVKAEKNVPNLKSTYNNVLQLIKVNFSSLDIHLHTEALLNTINYLHNILPQSEEKSAPVSTTETEDKGDVIKKLALKLSTNEDIITLQILAELSCLQIFIQDQKRNISEIKIEGLDSEMIMRPSETEINAKLRNIIVLDSDITAIYKKAVYITGKEVFSFKMVSYMDATAGSAYTDMNVVDIQVNLVVGCIEVVFVTKFLCSILAFIDNFQAAKQALAEATVQAAGMAATGVKELARRSSRMALDINIKAPVVVIPQSPVSENVFVADFGLITMTNTFHMITESQSSPPPVIDLITIKLSEMRLYRSQFINDAYQEVLDLLLPLNLEVVVERNLCWEWYQEVPCFNVNAQLKPMEFILSQEDITTIFKTLHGNIWYEKDGSASPAVTKDQYSATSGVTTNASHHSGGATVVTAAVVEVHSRASLVKTTLNVSFKTDYLTMVLYSPGPKQASFTDVRDPSLKLAEFKLENIISTLKMYTDDSTFSSFSLKNCILDDKRPHVKKATPRMIGLTVGFDKKDMMDIKYRKVRDGCVTDAVFQEMYICASVEFLQTVANVFLEAYTTGTAVETSVQTWTAKEEVPTQELEKWEINVIIKNPEIVFVADMTKNDAPALVITTQCEICYKGNLENSTMTAAIKDLQVRACPFLPIKRKGKVTTVLQPCDLFYQTTQAGTDPQVIDMSVKSLTLKVSPVIINTMITITSALYTTKETIPEETASSTAQLWEKKDTKTLKMWFLEESNETEKIAPTTELIPKGEMIKMNIDSIFIVLEAGIGHRTVPMLLAKSRFSGEGKNWSSLINLHCQLELEVHYYNEMFGVWEPLLEPLEIDQTEDFRPWNLGIKMKKKAKKAIVESDPEEENYKVPEYKTVISFHSKDQLNITLSKCGLVMLNNLAKAFTEAATGSSADFVKDLAPFIILNSLGLTISVSPSDSFSVLNIPMAKSYVLKNEESLSMDYVRTKDNDHFNAMTSLSSKLFFILLTPVNHSTADKIPLTKVGRRLYTVRHRESGVERSIVCQIDTVEGSKKVTIRSPVQIRNHFSVPLSVYEGDTLLGTASPENEFNIPLGSYRSFLFLKPEDEDYQRCEGIDFEEIVKNDGALLKKKCRSQNPSKKSFLINIVPEKDNLTSLSVYSEDGWDLPYIMHLWPPILLRNLLPYKIAYYIEGIENSVFTLSEGHSAQICTVQLDKARLRLKLLDYLNHDWKSEYHIKPNQQDISFVNFTCITEMEKTDLDIAVHMTYNTGQTVVAFHSPYWMVNKTGRMLQYKADGIHRKHPPNYKKPVLFSFQPNHFFNNNKVQLMVTDSELSDQFSIDTVGSHGAVKCKGLKMDYQVGVTIDLSSFNITRIVTFTPFYMIKNKSKYRISVAEEGTDKWLSLDLEQCIPFWPEDASSKLLIQVEGSEDPPKRIYFNKQENCILLRLDNELGGIIAEVNLAEHSTVITFLDYHDGAATFLLINHTKNELVQYNQSSLSEIEDSLPPGKAVFYTWADPVGSRRLKWRCRKSHGEVTQKDDMMMPIDLGKKTIYLVSFFEGLQRIILFTEDPKVFKVTYESEKAELAEQEIAVALQDVGISLVNNYTKQEVAYIGITSSDVVWETKPKKKARWKPMSVKHTEKLEREFKEYTESSPSEDKVIELDTNIPVRLTPTGHNMKILQPRVIALRRNYLPALKVEYNTSAHQSSFRIQIYRIQIQNQIHGAVFPFVFYPVKPPKSVTMDSAPKPFTDVSIVMRSAGHSQISRIKYFKVLIQEMDLRLDLGFIYALTDLMTEAEVTENTEVELFHKDIEAFKEEYKTASLVDQSQVSLYEYFHISPLKLHLSVSLSSGGEEAKDSKQNGGLIPVHSLNLLLKSIGATLTDVQDVVFKLAFFELNYQFHTTSDLQSEVIRHYSKQAIKQMYVLILGLDVLGNPFGLIREFSEGVEAFFYEPYQGAIQGPEEFVEGMALGLKALVGGAVGGLAGAASKITGAMAKGVAAMTMDEDYQQKRREAMNKQPAGFREGITRGGKGLVSGFVSGITGIVTKPIKGAQKEGAAGFFKGVGKGLVGAVARPTGGIIDMASSTFQGIKRATETSEVESLRPPRFFNEDGVIRPYRLRDGTGNQMLQKIQFCREWIMTHSSSSDDDDGDDDESDLNR.

Residues F3–K116 enclose the Chorein N-terminal domain. Residues L373–E406 form a TPR 1 repeat. S839 is subject to Phosphoserine. Residues E842–C848 carry the FFAT motif. S1416 carries the post-translational modification Phosphoserine. In terms of domain architecture, SHR-BD spans V2209–G2454. The stretch at I2860–F2898 is one TPR 2 repeat. A required for lipid droplet localization region spans residues P2953 to A3027.

Belongs to the VPS13 family. In terms of assembly, interacts (via FFAT motif) with VAPA and VAPB. Interacts with RAB7A. Interacts with XK.

The protein localises to the mitochondrion outer membrane. Its subcellular location is the endoplasmic reticulum membrane. It localises to the endosome membrane. It is found in the lysosome membrane. The protein resides in the lipid droplet. The protein localises to the golgi apparatus. Its subcellular location is the cytoplasmic vesicle. It localises to the secretory vesicle. It is found in the neuronal dense core vesicle. In terms of biological role, mediates the transfer of lipids between membranes at organelle contact sites. Required for the formation or stabilization of ER-mitochondria contact sites which enable transfer of lipids between the ER and mitochondria. Negatively regulates lipid droplet size and motility. Required for efficient lysosomal protein degradation. The protein is Intermembrane lipid transfer protein VPS13A (VPS13A) of Macaca fascicularis (Crab-eating macaque).